Reading from the N-terminus, the 427-residue chain is FAD-dependent monooxygenase OpS4 (427 aa).

The first 22 residues, 1–22 (MGSIREPLHLVVIGGGLAGLSA), serve as a signal peptide directing secretion. E37 is a binding site for FAD. N-linked (GlcNAc...) asparagine glycosylation occurs at N54. 3 residues coordinate FAD: R112, D306, and A319.

It belongs to the paxM FAD-dependent monooxygenase family. FAD is required as a cofactor.

It participates in secondary metabolite biosynthesis. FAD-dependent monooxygenase; part of the gene cluster that mediates the biosynthesis of the bibenzoquinone oosporein, a metabolite required for fungal virulence that acts by evading host immunity to facilitate fungal multiplication in insects. The non-reducing polyketide synthase OpS1 produces orsellinic acid by condensing acetyl-CoA with 3 malonyl-CoA units. Orsellinic acid is then hydroxylated to benzenetriol by the hydroxylase OpS4. The intermediate is oxidized either nonenzymatically to 5,5'-dideoxy-oosporein or enzymatically to benzenetetrol by the oxidoreductase OpS7. The latter is further dimerized to oosporein by the catalase OpS5. OpS6 probably functions en route for protecting cells against oxidative stress by scavenging any leaked free radical form of benzenetetrol by activating the thiol group of glutathione. This is FAD-dependent monooxygenase OpS4 from Beauveria bassiana (strain ARSEF 2860) (White muscardine disease fungus).